A 385-amino-acid chain; its full sequence is Probable protein phosphatase 2C 38 (385 aa).

One can recognise a PPM-type phosphatase domain in the interval 46–357; sequence VAGEFSMSVI…DDITVIVVFL (312 aa). Ser-77 carries the post-translational modification Phosphoserine. Mn(2+)-binding residues include Asp-88, Gly-89, Asp-289, and Asp-348.

This sequence belongs to the PP2C family. As to quaternary structure, interacts with BIK1. Requires Mg(2+) as cofactor. Mn(2+) is required as a cofactor. Post-translationally, phosphorylation at Ser-77 induces dissociation of PP2C38 from BIK1.

It localises to the cell membrane. The enzyme catalyses O-phospho-L-seryl-[protein] + H2O = L-seryl-[protein] + phosphate. It catalyses the reaction O-phospho-L-threonyl-[protein] + H2O = L-threonyl-[protein] + phosphate. May dephosphorylate and repress plasma membrane H(+)-ATPases (PM H(+)-ATPases, e.g. AHA1 and AHA2), thus influencing negatively plant growth and fitness. Involved in pathogen-associated molecular pattern (PAMP)-triggered immunity (PTI) signaling. Negatively regulates immune responses by controlling the phosphorylation and activation status of BIK1, a central rate-limiting kinase in PTI signaling. Impairs the phosphorylation of the NADPH oxidase RBOHD by BIK1. The protein is Probable protein phosphatase 2C 38 of Arabidopsis thaliana (Mouse-ear cress).